Consider the following 357-residue polypeptide: Mannonate dehydratase (357 aa).

This sequence belongs to the mannonate dehydratase family. Fe(2+) is required as a cofactor. It depends on Mn(2+) as a cofactor.

It catalyses the reaction D-mannonate = 2-dehydro-3-deoxy-D-gluconate + H2O. The protein operates within carbohydrate metabolism; pentose and glucuronate interconversion. Its function is as follows. Catalyzes the dehydration of D-mannonate. In Enterococcus faecalis (strain ATCC 700802 / V583), this protein is Mannonate dehydratase.